Here is an 87-residue protein sequence, read N- to C-terminus: uncharacterized protein (87 aa).

To H.pylori HP0495/JHP0447.

This is an uncharacterized protein from Campylobacter jejuni subsp. jejuni serotype O:2 (strain ATCC 700819 / NCTC 11168).